We begin with the raw amino-acid sequence, 249 residues long: Exosome complex component Rrp41 (249 aa).

The protein belongs to the RNase PH family. Rrp41 subfamily. As to quaternary structure, component of the archaeal exosome complex. Forms a hexameric ring-like arrangement composed of 3 Rrp41-Rrp42 heterodimers. The hexameric ring associates with a trimer of Rrp4 and/or Csl4 subunits.

It localises to the cytoplasm. Its function is as follows. Catalytic component of the exosome, which is a complex involved in RNA degradation. Has 3'-&gt;5' exoribonuclease activity. Can also synthesize heteromeric RNA-tails. The protein is Exosome complex component Rrp41 of Thermococcus gammatolerans (strain DSM 15229 / JCM 11827 / EJ3).